The following is a 38-amino-acid chain: Large ribosomal subunit protein bL36 (38 aa).

Belongs to the bacterial ribosomal protein bL36 family.

The polypeptide is Large ribosomal subunit protein bL36 (Prochlorococcus marinus (strain MIT 9312)).